The primary structure comprises 113 residues: MRHYEIVLMIHTDQSDQISNIIEHYTKMIKINKGSIHRLEDWGRRQLAYPIKKLNKAHYILMNIETSTKVLNNIIQDLNLNNFIIRNMIMRVKNAINEPSPMKKTKENKELNN.

Belongs to the bacterial ribosomal protein bS6 family.

Binds together with bS18 to 16S ribosomal RNA. The polypeptide is Small ribosomal subunit protein bS6 (Wigglesworthia glossinidia brevipalpis).